The following is a 506-amino-acid chain: ATP synthase subunit alpha (506 aa).

Residue 171–178 (GDRQTGKT) participates in ATP binding.

It belongs to the ATPase alpha/beta chains family. In terms of assembly, F-type ATPases have 2 components, CF(1) - the catalytic core - and CF(0) - the membrane proton channel. CF(1) has five subunits: alpha(3), beta(3), gamma(1), delta(1), epsilon(1). CF(0) has four main subunits: a(1), b(1), b'(1) and c(9-12).

Its subcellular location is the cellular thylakoid membrane. It catalyses the reaction ATP + H2O + 4 H(+)(in) = ADP + phosphate + 5 H(+)(out). Its function is as follows. Produces ATP from ADP in the presence of a proton gradient across the membrane. The alpha chain is a regulatory subunit. The protein is ATP synthase subunit alpha of Trichormus variabilis (strain ATCC 29413 / PCC 7937) (Anabaena variabilis).